Consider the following 487-residue polypeptide: Glutamate--tRNA ligase 2 (487 aa).

The 'HIGH' region signature appears at 24 to 34 (PSPTGFLHIGG). The 'KMSKS' region motif lies at 258–262 (KLSKR). Lys261 provides a ligand contact to ATP.

The protein belongs to the class-I aminoacyl-tRNA synthetase family. Glutamate--tRNA ligase type 1 subfamily. As to quaternary structure, monomer.

It localises to the cytoplasm. The enzyme catalyses tRNA(Glu) + L-glutamate + ATP = L-glutamyl-tRNA(Glu) + AMP + diphosphate. Functionally, catalyzes the attachment of glutamate to tRNA(Glu) in a two-step reaction: glutamate is first activated by ATP to form Glu-AMP and then transferred to the acceptor end of tRNA(Glu). The polypeptide is Glutamate--tRNA ligase 2 (Novosphingobium aromaticivorans (strain ATCC 700278 / DSM 12444 / CCUG 56034 / CIP 105152 / NBRC 16084 / F199)).